Here is a 130-residue protein sequence, read N- to C-terminus: Transcription antitermination protein NusB (130 aa).

The protein belongs to the NusB family.

Functionally, involved in transcription antitermination. Required for transcription of ribosomal RNA (rRNA) genes. Binds specifically to the boxA antiterminator sequence of the ribosomal RNA (rrn) operons. The chain is Transcription antitermination protein NusB from Bacillus anthracis (strain A0248).